Reading from the N-terminus, the 221-residue chain is PKHD-type hydroxylase P9215_13741 (221 aa).

The Fe2OG dioxygenase domain maps to 80–174 (RIHGTMFTKT…RFVVVGWIES (95 aa)). Fe cation contacts are provided by histidine 98, aspartate 100, and histidine 155. Arginine 165 is a 2-oxoglutarate binding site.

Requires Fe(2+) as cofactor. L-ascorbate serves as cofactor.

In Prochlorococcus marinus (strain MIT 9215), this protein is PKHD-type hydroxylase P9215_13741.